A 142-amino-acid polypeptide reads, in one-letter code: MPRGSRSAASRPASRPAAPSAHPPAHPPPSAAAPAPAPSGQPGLMAQMATTAAGVAVGSAVGHVMGSALTGAFSGGSSEPSQPAVQQAPTPAAPQPLQMGPCAYEIRQFLDCSTTQSDLSLCEGFSEALKQCKYYHGLSSLP.

Residues 1 to 16 (MPRGSRSAASRPASRP) constitute a mitochondrion transit peptide. A compositionally biased stretch (low complexity) spans 1-20 (MPRGSRSAASRPASRPAAPS). 2 disordered regions span residues 1–45 (MPRG…PGLM) and 68–97 (ALTG…PQPL). Residues 21–39 (AHPPAHPPPSAAAPAPAPS) show a composition bias toward pro residues. The span at 80 to 90 (PSQPAVQQAPT) shows a compositional bias: low complexity. In terms of domain architecture, CHCH spans 99-140 (MGPCAYEIRQFLDCSTTQSDLSLCEGFSEALKQCKYYHGLSS). 2 short sequence motifs (cx9C motif) span residues 102-112 (CAYEIRQFLDC) and 122-132 (CEGFSEALKQC). 2 disulfide bridges follow: cysteine 102-cysteine 132 and cysteine 112-cysteine 122.

Ubiquitously expressed. Higher expression is observed in heart and liver.

It is found in the mitochondrion intermembrane space. Functionally, may be involved in the maintenance of mitochondrial organization and mitochondrial cristae structure. The chain is Coiled-coil-helix-coiled-coil-helix domain-containing protein 10, mitochondrial (CHCHD10) from Homo sapiens (Human).